Reading from the N-terminus, the 274-residue chain is Ceramide synthase (274 aa).

In terms of domain architecture, TLC spans 34-261 (ADAVIVSARL…ICRGACRLFW (228 aa)). 4 helical membrane passes run 130–150 (FLMV…SVVW), 159–179 (LGCM…KILI), 194–214 (ALML…LYWA), and 223–243 (LLAV…LLLA).

Expressed in testis. Expressed in the retina with higher expression levels in the macular than in the peripheral region.

The protein localises to the golgi apparatus membrane. It is found in the endoplasmic reticulum membrane. The catalysed reaction is sphing-4-enine + octadecanoyl-CoA = N-octadecanoylsphing-4-enine + CoA + H(+). It catalyses the reaction eicosanoyl-CoA + sphing-4-enine = N-eicosanoyl-sphing-4-enine + CoA + H(+). The enzyme catalyses sphing-4-enine + hexadecanoyl-CoA = N-hexadecanoylsphing-4-enine + CoA + H(+). Functionally, involved in ceramide synthesis. The sequence is that of Ceramide synthase from Homo sapiens (Human).